A 1390-amino-acid polypeptide reads, in one-letter code: DNA-directed RNA polymerase subunit beta'' (1390 aa).

Positions 224, 294, 301, and 304 each coordinate Zn(2+).

The protein belongs to the RNA polymerase beta' chain family. RpoC2 subfamily. In terms of assembly, in plastids the minimal PEP RNA polymerase catalytic core is composed of four subunits: alpha, beta, beta', and beta''. When a (nuclear-encoded) sigma factor is associated with the core the holoenzyme is formed, which can initiate transcription. Zn(2+) serves as cofactor.

It is found in the plastid. The protein resides in the chloroplast. The enzyme catalyses RNA(n) + a ribonucleoside 5'-triphosphate = RNA(n+1) + diphosphate. Its function is as follows. DNA-dependent RNA polymerase catalyzes the transcription of DNA into RNA using the four ribonucleoside triphosphates as substrates. This Ceratophyllum demersum (Rigid hornwort) protein is DNA-directed RNA polymerase subunit beta''.